A 701-amino-acid chain; its full sequence is Type 3 secretion system secretin (701 aa).

Positions Met1 to Ala21 are cleaved as a signal peptide. The span at Arg229–Ser238 shows a compositional bias: gly residues. Positions Arg229 to Asp252 are disordered. Positions Asp240–Asp252 are enriched in polar residues.

It belongs to the bacterial secretin family. T3SS SctC subfamily. The core secretion machinery of the T3SS is composed of approximately 20 different proteins, including cytoplasmic components, a base, an export apparatus and a needle. This subunit is part of the base, which anchors the injectisome in the bacterial cell envelope. Forms a stable homooligomeric complex.

Its subcellular location is the cell outer membrane. Component of the type III secretion system (T3SS), also called injectisome, which is used to inject bacterial effector proteins into eukaryotic host cells. Forms a ring-shaped multimeric structure with an apparent central pore in the outer membrane. Involved in the secretion of a proteinaceous elicitor of the hypersensitivity response in plants. This Pseudomonas syringae pv. syringae protein is Type 3 secretion system secretin.